The following is a 151-amino-acid chain: Large ribosomal subunit protein bL9 (151 aa).

This sequence belongs to the bacterial ribosomal protein bL9 family.

In terms of biological role, binds to the 23S rRNA. The chain is Large ribosomal subunit protein bL9 from Chlorobium luteolum (strain DSM 273 / BCRC 81028 / 2530) (Pelodictyon luteolum).